The chain runs to 86 residues: Small ribosomal subunit protein bS20 (86 aa).

Belongs to the bacterial ribosomal protein bS20 family.

Binds directly to 16S ribosomal RNA. The sequence is that of Small ribosomal subunit protein bS20 from Pelagibacter ubique (strain HTCC1062).